The primary structure comprises 229 residues: Uracil-DNA glycosylase (229 aa).

Residue Asp67 is the Proton acceptor of the active site.

Belongs to the uracil-DNA glycosylase (UDG) superfamily. UNG family.

The protein resides in the cytoplasm. It catalyses the reaction Hydrolyzes single-stranded DNA or mismatched double-stranded DNA and polynucleotides, releasing free uracil.. Excises uracil residues from the DNA which can arise as a result of misincorporation of dUMP residues by DNA polymerase or due to deamination of cytosine. In Coxiella burnetii (strain RSA 493 / Nine Mile phase I), this protein is Uracil-DNA glycosylase.